The chain runs to 176 residues: MALWRAYQRALTAHPWKVQVLTAGSLMGLGDVISQQLVERRGLQAHQAGRTLTMASLGCGFVGPVVGGWYRVLDRLIPGTTKVDALKKMLLDQGGFAPCFLGCFLPLVGTLNGLSAQDNWAKLQRDFPDALITNYYLWPAVQLANFYLVPLHYRLAVVQCVAVIWNSYLSWKAHRL.

The next 4 helical transmembrane spans lie at 18 to 38, 53 to 73, 94 to 114, and 131 to 151; these read VQVL…QQLV, TMAS…YRVL, GGFA…LNGL, and LITN…LVPL.

It belongs to the peroxisomal membrane protein PXMP2/4 family.

It is found in the mitochondrion inner membrane. Its function is as follows. Non-selective channel that modulates the membrane potential under normal conditions and oxidative stress, and is involved in mitochondrial homeostasis. Involved in mitochondrial deoxynucleoside triphosphates (dNTP) pool homeostasis and mitochondrial DNA (mtDNA) maintenance. May be involved in the regulation of reactive oxygen species metabolism and the control of oxidative phosphorylation. This chain is Mitochondrial inner membrane protein Mpv17, found in Bos taurus (Bovine).